A 240-amino-acid polypeptide reads, in one-letter code: DISARM protein DrmC (240 aa).

A PLD phosphodiesterase domain is found at 174–201 (GYSSLHAKVIMVDEEKAFVSSANLSYNG). Active-site residues include His-179, Lys-181, and Asp-186.

It belongs to the phospholipase D family.

Its subcellular location is the cytoplasm. Functionally, component of antiviral defense system DISARM (defense island system associated with restriction-modification), composed of DrmE, DrmA, DrmB, DrmC and DrmMII. DISARM is probably a multi-gene restriction module, this subunit is probably a phospholipase or nuclease. Expression of DISARM in B.subtilis (strain BEST7003) confers resistance to phages Nf, phi29, phi105, phi3T, SPO1, SPR and SPP1. Protection is over 10(7)-fold against phi3T, 10(4)-10(5)-fold against Nf, phi29, phi105 and SPR, 100-fold against SPO1 and 10-fold against SPP1. DISARM does not interfere with phage adsorption, but instead interferes with (phi3T) DNA replication early in its cycle, preventing replication, circularization and lysogeny and probably causes phage DNA degradation (DNA is degraded in SPP1-infected cells). This chain is DISARM protein DrmC, found in Bacillus paralicheniformis (strain ATCC 9945a / NCIMB 11709 / CD-2).